We begin with the raw amino-acid sequence, 456 residues long: IQ domain-containing protein IQM3 (456 aa).

Residues 46–75 (TRLAAVKVQKVYRSYRTRRRLADSVVVAEE) enclose the IQ domain. The disordered stretch occupies residues 315–358 (SEDSDSYDDYVKSNGGSEPEPLKKEDTTFQAETETDENGNGTVG).

Expressed in roots, rosette and cauline leaves, flowers and siliques, and at lower levels in stems.

The protein localises to the cytoplasm. It is found in the nucleus. Functionally, may be involved in biotic and abiotic stress responses. The chain is IQ domain-containing protein IQM3 from Arabidopsis thaliana (Mouse-ear cress).